We begin with the raw amino-acid sequence, 150 residues long: Ribonuclease pancreatic delta-type (150 aa).

The first 25 residues, 1–25 (MGLEKSFILFSLLVLVLGWVQPSLG), serve as a signal peptide directing secretion. R35 is a binding site for substrate. H37 functions as the Proton acceptor in the catalytic mechanism. Cystine bridges form between C51-C110, C65-C121, C83-C136, and C90-C98. Substrate-binding positions include 66–70 (KRVNT), K91, and R111. The active-site Proton donor is H145.

Belongs to the pancreatic ribonuclease family. As to quaternary structure, monomer.

The protein resides in the secreted. It catalyses the reaction an [RNA] containing cytidine + H2O = an [RNA]-3'-cytidine-3'-phosphate + a 5'-hydroxy-ribonucleotide-3'-[RNA].. The enzyme catalyses an [RNA] containing uridine + H2O = an [RNA]-3'-uridine-3'-phosphate + a 5'-hydroxy-ribonucleotide-3'-[RNA].. Endonuclease that catalyzes the cleavage of RNA on the 3' side of pyrimidine nucleotides. Acts on single-stranded and double-stranded RNA. The protein is Ribonuclease pancreatic delta-type (Rnase1d) of Rattus norvegicus (Rat).